A 966-amino-acid polypeptide reads, in one-letter code: Regulator of telomere elongation helicase 1 homolog (966 aa).

The 278-residue stretch at 7–284 (AGIPVHFPFE…QDMAGDEPKD (278 aa)) folds into the Helicase ATP-binding domain. ATP is bound at residue 42 to 49 (SPTGTGKT). Residues cysteine 146, cysteine 164, cysteine 173, and cysteine 209 each coordinate [4Fe-4S] cluster. Positions 233–236 (DEAH) match the DEAH box motif. Positions 844–864 (VKIHKRERSSPTAPESTSQVS) are disordered. A compositionally biased stretch (polar residues) spans 853-863 (SPTAPESTSQV). Threonine 855 carries the post-translational modification Phosphothreonine.

It belongs to the helicase family. RAD3/XPD subfamily.

The protein resides in the nucleus. It carries out the reaction ATP + H2O = ADP + phosphate + H(+). Functionally, a probable ATP-dependent DNA helicase implicated in DNA repair and the maintenance of genomic stability. Acts as an anti-recombinase to counteract toxic recombination and limit crossover during meiosis. Regulates meiotic recombination and crossover homeostasis by physically dissociating strand invasion events and thereby promotes noncrossover repair by meiotic synthesis dependent strand annealing (SDSA) as well as disassembly of D loop recombination intermediates. The protein is Regulator of telomere elongation helicase 1 homolog of Drosophila sechellia (Fruit fly).